A 911-amino-acid chain; its full sequence is Inter-alpha-trypsin inhibitor heavy chain H1 (911 aa).

The signal sequence occupies residues 1 to 27; the sequence is MDGAMGPRGLLLCMYLVSLLILQAMPA. A propeptide spanning residues 28 to 34 is cleaved from the precursor; it reads LGSATGR. The region spanning 37-166 is the VIT domain; it reads SSEKRQAVDT…KVTFQLTYEE (130 aa). S-linked (Hex...) cysteine glycosylation occurs at C60. S129 is modified (phosphoserine). The Phagocytosis uptake signal motif lies at 181-184; the sequence is VKPK. 2 disulfides stabilise this stretch: C244/C247 and C268/C540. N285 carries N-linked (GlcNAc...) (complex) asparagine glycosylation. Positions 290-450 constitute a VWFA domain; it reads NKNVVFVIDI…FNFLEVMSME (161 aa). Positions 387–911 are hyaluronan-binding; it reads SLPELSNHAS…YTDYIVPDIF (525 aa). 2 positions are modified to phosphothreonine: T402 and T407. N588 carries an N-linked (GlcNAc...) (complex) asparagine glycan. Residue T653 is glycosylated (O-linked (GalNAc...) threonine). D672 is subject to Aspartate 1-(chondroitin 4-sulfate)-ester. Positions 673–911 are excised as a propeptide; the sequence is PHFIIHVPQK…YTDYIVPDIF (239 aa). N750 carries an N-linked (GlcNAc...) asparagine glycan.

It belongs to the ITIH family. As to quaternary structure, I-alpha-I plasma protease inhibitors are assembled from one or two heavy chains (HC) and one light chain, bikunin. Inter-alpha-inhibitor (I-alpha-I) is composed of ITIH1/HC1, ITIH2/HC2 and bikunin. Interacts with TNFAIP6 (via Link and CUB domains). Post-translationally, heavy chains are linked to bikunin via chondroitin 4-sulfate esterified to the alpha-carboxyl of the C-terminal aspartate after propeptide cleavage. In terms of processing, the S-linked glycan is composed of two 6-carbon sugars, possibly Glc or Gal.

The protein localises to the secreted. In terms of biological role, may act as a carrier of hyaluronan in serum or as a binding protein between hyaluronan and other matrix protein, including those on cell surfaces in tissues to regulate the localization, synthesis and degradation of hyaluronan which are essential to cells undergoing biological processes. Contains a potential peptide which could stimulate a broad spectrum of phagocytotic cells. In Homo sapiens (Human), this protein is Inter-alpha-trypsin inhibitor heavy chain H1 (ITIH1).